Reading from the N-terminus, the 419-residue chain is RING finger protein 150 (419 aa).

The first 34 residues, 1–34, serve as a signal peptide directing secretion; it reads MALSVIQACRSLALSTWLLSFCFVHLLCLDFTVA. At 35 to 197 the chain is on the extracellular side; it reads EKEEWYTAFV…NLQKYVSRTS (163 aa). The 103-residue stretch at 70–172 folds into the PA domain; that stretch reads SLKREARGVL…PKGRELVLLM (103 aa). The chain crosses the membrane as a helical span at residues 198–218; that stretch reads VVFVSISFIILMIISLAWLVF. Residues 219 to 419 lie on the Cytoplasmic side of the membrane; the sequence is YYIQRFRYAN…IDTPTDDPKC (201 aa). An RING-type; atypical zinc finger spans residues 267 to 308; that stretch reads CAVCIEGYKPNDVVRILPCRHLFHKCCVDPWLVDHRTCPMCK. Residues 374–419 form a disordered region; the sequence is SEPLSQDTMPTEQSELQPIASGSSDVSLTTGAGHSDIDTPTDDPKC. Residues 376–405 show a composition bias toward polar residues; that stretch reads PLSQDTMPTEQSELQPIASGSSDVSLTTGA.

It is found in the membrane. The sequence is that of RING finger protein 150 (rnf150) from Danio rerio (Zebrafish).